The primary structure comprises 661 residues: MGTLFRRNVQNQKSDSDENNKGGSVHNKRESRNHIHHQQGLGHKRRRGISGSAKRNERGKDFDRKRDGNGRKRWRDSRRLIFILGAFLGVLLPFSFGAYHVHNSDSDLFDNFVNFDSLKVYLDDWKDVLPQGISSFIDDIQAGNYSTSSLDDLSENFAVGKQLLRDYNIEAKHPVVMVPGVISTGIESWGVIGDDECDSSAHFRKRLWGSFYMLRTMVMDKVCWLKHVMLDPETGLDPPNFTLRAAQGFESTDYFIAGYWIWNKVFQNLGVIGYEPNKMTSAAYDWRLAYLDLERRDRYFTKLKEQIELFHQLSGEKVCLIGHSMGSQIIFYFMKWVEAEGPLYGNGGRGWVNEHIDSFINAAGTLLGAPKAVPALISGEMKDTIQLNTLAMYGLEKFFSRIERVKMLQTWGGIPSMLPKGEEVIWGDMKSSSEDALNNNTDTYGNFIRFERNTSDAFNKNLTMKDAINMTLSISPEWLQRRVHEQYSFGYSKNEEELRKNELHHKHWSNPMEVPLPEAPHMKIYCIYGVNNPTERAYVYKEEDDSSALNLTIDYESKQPVFLTEGDGTVPLVAHSMCHKWAQGASPYNPAGINVTIVEMKHQPDRFDIRGGAKSAEHVDILGSAELNDYILKIASGNGDLVEPRQLSNLSQWVSQMPFPM.

The disordered stretch occupies residues 1–71; that stretch reads MGTLFRRNVQ…FDRKRDGNGR (71 aa). The Cytoplasmic portion of the chain corresponds to 1 to 80; sequence MGTLFRRNVQ…RKRWRDSRRL (80 aa). The segment covering 34–48 has biased composition (basic residues); sequence HIHHQQGLGHKRRRG. 2 consecutive short sequence motifs (bipartite nuclear localization signal) follow at residues 43–50 and 64–71; these read HKRRRGIS and RKRDGNGR. Over residues 54–70 the composition is skewed to basic and acidic residues; that stretch reads KRNERGKDFDRKRDGNG. A helical transmembrane segment spans residues 81-101; it reads IFILGAFLGVLLPFSFGAYHV. Over 102 to 661 the chain is Lumenal; the sequence is HNSDSDLFDN…QWVSQMPFPM (560 aa). Gln162 serves as a coordination point for substrate. The GHSXG lipase motif signature appears at 322–326; the sequence is GHSMG. Residue Ser324 is the Acyl-ester intermediate of the active site. Met325 contacts substrate. Asn453, Asn461, and Asn469 each carry an N-linked (GlcNAc...) asparagine glycan. The active-site Charge relay system is Asp567. Asn594 carries an N-linked (GlcNAc...) asparagine glycan. His618 (charge relay system) is an active-site residue.

Belongs to the AB hydrolase superfamily. Lipase family.

It is found in the endoplasmic reticulum membrane. It localises to the nucleus inner membrane. The enzyme catalyses a glycerophospholipid + a 1,2-diacyl-sn-glycerol = a monoacylglycerophospholipid + a triacyl-sn-glycerol. It catalyses the reaction a 1-acyl-sn-glycerol + a 1,2-diacyl-sn-glycero-3-phosphocholine = a 1-acyl-sn-glycero-3-phosphocholine + a 1,2-diacyl-sn-glycerol. It carries out the reaction 1,2-di-(9Z-octadecenoyl)-sn-glycero-3-phosphoethanolamine + 1,2-di-(9Z-octadecenoyl)-sn-glycerol = 1-(9Z-octadecenoyl)-sn-glycero-3-phosphoethanolamine + 1,2,3-tri-(9Z-octadecenoyl)-glycerol. The catalysed reaction is 1,2-di-(9Z-octadecenoyl)-sn-glycerol + 1,2-di-(9Z-octadecenoyl)-sn-glycero-3-phosphocholine = 1,2,3-tri-(9Z-octadecenoyl)-glycerol + 1-(9Z-octadecenoyl)-sn-glycero-3-phosphocholine. The enzyme catalyses 1-(9Z-octadecenoyl)-sn-glycerol + 1,2-di-(9Z-octadecenoyl)-sn-glycero-3-phosphocholine = di-(9Z)-octadecenoylglycerol + 1-(9Z-octadecenoyl)-sn-glycero-3-phosphocholine. It catalyses the reaction 2-(9Z-octadecenoyl)-glycerol + 1,2-di-(9Z-octadecenoyl)-sn-glycero-3-phosphocholine = 1,2-di-(9Z-octadecenoyl)-glycerol + 1-(9Z-octadecenoyl)-sn-glycero-3-phosphocholine. It carries out the reaction 1-(9Z-octadecenoyl)-2-hexadecanoyl-sn-glycero-3-phosphoethanolamine + 1,2-di-(9Z-octadecenoyl)-sn-glycerol = 1,2-di-(9Z)-octadecenoyl-3-hexadecanoyl-sn-glycerol + 1-(9Z-octadecenoyl)-sn-glycero-3-phosphoethanolamine. The catalysed reaction is 1-(9Z-octadecenoyl)-2-octadecanoyl-sn-glycero-3-phosphoethanolamine + 1,2-di-(9Z-octadecenoyl)-sn-glycerol = 1,2-di-(9Z)-octadecenoyl-3-octadecanoyl-sn-glycerol + 1-(9Z-octadecenoyl)-sn-glycero-3-phosphoethanolamine. The enzyme catalyses 1-(9Z)-octadecenoyl-2-(9Z,12Z)-octadecadienoyl-sn-glycero-3-phosphoethanolamine + 1,2-di-(9Z-octadecenoyl)-sn-glycerol = 1,2-di-(9Z)-octadecenoyl-3-(9Z,12Z)-octadecadienoyl-sn-glycerol + 1-(9Z-octadecenoyl)-sn-glycero-3-phosphoethanolamine. Its function is as follows. Catalyzes triacylglycerol (TAG) formation by an acyl-CoA independent pathway. The enzyme specifically transfers acyl groups from the sn-2 position of a phospholipid to diacylglycerol (DAG), thus forming an sn-1-lysophospholipid. The preferred acyl donors are phosphatidylethanolamine (PE) and phosphatidylcholine (PC). Also capable of using broad acyl donors such as phosphatidic acid (PA), phosphatidylserine (PS), phosphatidylglycerol (PG) and phosphatidylinositol (PI), as well as monogalactosyldiacylglycerol (MGDG), digalactosyldiacylglycerol (DGDG), and acyl-CoA, and it is more likely to use unsaturated acyl donors. As acyl acceptors, it prefers 1,2- over 1,3-diacylglycerol (DAG). Additionally, has esterification activity that can utilize methanol as acyl acceptor to generate fatty acid methyl esters (FAME). Can also utilize ceramide instead of DAG, acylating the ceramides by attaching a fatty acid to the hydroxy group on the first carbon atom of the long-chain base to produce 1-O-acylceramides. Involved in lipid particle synthesis from the endoplasmic reticulum, promoting localized TAG production at discrete ER subdomains. Relocates from the endoplasmic reticulum to a subdomain of the inner nuclear membrane upon nutrient starvation, where it provides a site of TAG synthesis, which is coupled with nuclear membrane remodeling. This Saccharomyces cerevisiae (strain ATCC 204508 / S288c) (Baker's yeast) protein is Phospholipid:diacylglycerol acyltransferase.